Consider the following 328-residue polypeptide: Transcription factor bHLH25 (328 aa).

The disordered stretch occupies residues 125-152; sequence PHQKSDEFNRKGTKRAQPFSRNQSNAQD. The 50-residue stretch at 148 to 197 folds into the bHLH domain; the sequence is SNAQDHIIAERKRREKLTQRFVALSALVPGLKKMDKASVLGDALKHIKYL.

As to quaternary structure, homodimer. In terms of tissue distribution, expressed in flowers.

The protein resides in the nucleus. This Arabidopsis thaliana (Mouse-ear cress) protein is Transcription factor bHLH25 (BHLH25).